A 93-amino-acid chain; its full sequence is Small ribosomal subunit protein bS18 (93 aa).

It belongs to the bacterial ribosomal protein bS18 family. Part of the 30S ribosomal subunit. Forms a tight heterodimer with protein bS6.

Binds as a heterodimer with protein bS6 to the central domain of the 16S rRNA, where it helps stabilize the platform of the 30S subunit. This Paracidovorax citrulli (strain AAC00-1) (Acidovorax citrulli) protein is Small ribosomal subunit protein bS18.